The following is a 667-amino-acid chain: Protein adenylyltransferase SelO, mitochondrial (667 aa).

The transit peptide at 1–6 (MASVRA) directs the protein to the mitochondrion. ATP contacts are provided by G154, G156, K177, D189, G190, R247, and R254. The active-site Proton acceptor is the D341. The Mg(2+) site is built by N342 and D351. D351 is a binding site for ATP. Residues 628–652 (YHSEEEATGPEAVARSTEEQSSYSN) form a disordered region. Position 635 is a phosphothreonine (T635). S651 is modified (phosphoserine). A non-standard amino acid (selenocysteine) is located at residue U665.

It belongs to the SELO family. Requires Mg(2+) as cofactor.

It is found in the mitochondrion. The catalysed reaction is L-tyrosyl-[protein] + ATP = O-(5'-adenylyl)-L-tyrosyl-[protein] + diphosphate. It catalyses the reaction L-threonyl-[protein] + ATP = 3-O-(5'-adenylyl)-L-threonyl-[protein] + diphosphate. The enzyme catalyses L-seryl-[protein] + ATP = 3-O-(5'-adenylyl)-L-seryl-[protein] + diphosphate. In terms of biological role, catalyzes the transfer of adenosine 5'-monophosphate (AMP) to Ser, Thr and Tyr residues of target proteins (AMPylation). May be a redox-active mitochondrial selenoprotein which interacts with a redox target protein. The protein is Protein adenylyltransferase SelO, mitochondrial of Mus musculus (Mouse).